Consider the following 111-residue polypeptide: Cell cycle protein GpsB (111 aa).

Residues 38–72 (IKDYEAFHKEFEQLKQQNARLKRELEEQKLAVTQV) are a coiled coil.

This sequence belongs to the GpsB family. As to quaternary structure, forms polymers through the coiled coil domains. Interacts with PBP1, MreC and EzrA.

The protein localises to the cytoplasm. In terms of biological role, divisome component that associates with the complex late in its assembly, after the Z-ring is formed, and is dependent on DivIC and PBP2B for its recruitment to the divisome. Together with EzrA, is a key component of the system that regulates PBP1 localization during cell cycle progression. Its main role could be the removal of PBP1 from the cell pole after pole maturation is completed. Also contributes to the recruitment of PBP1 to the division complex. Not essential for septum formation. The polypeptide is Cell cycle protein GpsB (Bacillus cereus (strain G9842)).